A 139-amino-acid polypeptide reads, in one-letter code: D-ribose pyranase (139 aa).

Catalysis depends on histidine 20, which acts as the Proton donor. Substrate contacts are provided by residues aspartate 28, histidine 106, and 128–130 (YAN).

It belongs to the RbsD / FucU family. RbsD subfamily. Homodecamer.

The protein localises to the cytoplasm. The catalysed reaction is beta-D-ribopyranose = beta-D-ribofuranose. The protein operates within carbohydrate metabolism; D-ribose degradation; D-ribose 5-phosphate from beta-D-ribopyranose: step 1/2. Its function is as follows. Catalyzes the interconversion of beta-pyran and beta-furan forms of D-ribose. This is D-ribose pyranase from Salmonella agona (strain SL483).